The primary structure comprises 462 residues: Argininosuccinate lyase (462 aa).

Belongs to the lyase 1 family. Argininosuccinate lyase subfamily.

The protein resides in the cytoplasm. The enzyme catalyses 2-(N(omega)-L-arginino)succinate = fumarate + L-arginine. The protein operates within amino-acid biosynthesis; L-arginine biosynthesis; L-arginine from L-ornithine and carbamoyl phosphate: step 3/3. The polypeptide is Argininosuccinate lyase (Ehrlichia ruminantium (strain Welgevonden)).